The chain runs to 221 residues: NADH-ubiquinone oxidoreductase chain 6 (221 aa).

Transmembrane regions (helical) follow at residues 18 to 38 (FVEY…IYVI), 44 to 64 (IVSV…LNII), 74 to 94 (IIVY…LINI), 107 to 127 (IPLT…MLPY), and 195 to 215 (IWLI…IVIT).

The protein belongs to the complex I subunit 6 family.

It localises to the mitochondrion membrane. The catalysed reaction is a ubiquinone + NADH + 5 H(+)(in) = a ubiquinol + NAD(+) + 4 H(+)(out). Its function is as follows. Core subunit of the mitochondrial membrane respiratory chain NADH dehydrogenase (Complex I) that is believed to belong to the minimal assembly required for catalysis. Complex I functions in the transfer of electrons from NADH to the respiratory chain. The immediate electron acceptor for the enzyme is believed to be ubiquinone. This is NADH-ubiquinone oxidoreductase chain 6 (ND6) from Podospora anserina (strain S / ATCC MYA-4624 / DSM 980 / FGSC 10383) (Pleurage anserina).